Consider the following 144-residue polypeptide: Large ribosomal subunit protein uL15 (144 aa).

Residues Met-1–Ala-58 are disordered. Residues Arg-21–Gly-31 are compositionally biased toward gly residues.

This sequence belongs to the universal ribosomal protein uL15 family. In terms of assembly, part of the 50S ribosomal subunit.

Its function is as follows. Binds to the 23S rRNA. The protein is Large ribosomal subunit protein uL15 of Marinobacter nauticus (strain ATCC 700491 / DSM 11845 / VT8) (Marinobacter aquaeolei).